We begin with the raw amino-acid sequence, 87 residues long: uncharacterized protein (87 aa).

The protein to A.fulgidus AF_1348 and AF_1363.

This is an uncharacterized protein from Archaeoglobus fulgidus (strain ATCC 49558 / DSM 4304 / JCM 9628 / NBRC 100126 / VC-16).